We begin with the raw amino-acid sequence, 298 residues long: uncharacterized protein (298 aa).

The tract at residues 264 to 298 (APPPPLPCITTGPAALEDSPKASKANKGKKAKAKK) is disordered. Residues 287–298 (KANKGKKAKAKK) show a composition bias toward basic residues.

This is an uncharacterized protein from Mus musculus (Mouse).